A 440-amino-acid chain; its full sequence is Xylose isomerase (440 aa).

Residues histidine 101 and aspartate 104 contribute to the active site. Glutamate 232, glutamate 268, histidine 271, aspartate 296, aspartate 307, aspartate 309, and aspartate 339 together coordinate Mg(2+).

Belongs to the xylose isomerase family. In terms of assembly, homotetramer. It depends on Mg(2+) as a cofactor.

The protein resides in the cytoplasm. It catalyses the reaction alpha-D-xylose = alpha-D-xylulofuranose. This chain is Xylose isomerase, found in Escherichia coli O157:H7.